Reading from the N-terminus, the 578-residue chain is Phosphatase DCR2 (578 aa).

116–123 (GRRWFGKS) contributes to the ATP binding site.

It is found in the cytoplasm. Functionally, required for cell cycle progression. Has a role in the completion of START. The sequence is that of Phosphatase DCR2 (DCR2) from Saccharomyces cerevisiae (strain ATCC 204508 / S288c) (Baker's yeast).